We begin with the raw amino-acid sequence, 48 residues long: uncharacterized protein (48 aa).

The protein resides in the mitochondrion. This is an uncharacterized protein from Emericella nidulans (Aspergillus nidulans).